Here is a 531-residue protein sequence, read N- to C-terminus: Outer dynein arm-docking complex subunit 4 (531 aa).

TPR repeat units follow at residues 15–48 (FSTYMAEGEQLYHKAEYKKASDSFTAALQLQPEE), 50–82 (NCLVARSKCFLKLGEPECALKDAEASLQIENDF), and 83–116 (FKGLYQKAEALYAMGDFEFALVHYHRGYKLRPEF). The interval 161-185 (KQKAQVKVQKKDSKQQKKVDPERSQ) is disordered. Positions 169-185 (QKKDSKQQKKVDPERSQ) are enriched in basic and acidic residues. TPR repeat units lie at residues 275 to 307 (VKSLEEIDQLLSSGKAEESYKKAQLVLKKVERW), 320 to 353 (GSLHSCIGNAQMDMGQIEAALQSHKKDLAIAEKY), 360 to 393 (SRALDNIGRVYARIGKFNEAIKVWEEKIPLANSS), 397 to 430 (TWLYHEIGRCYLELEQTAEAKEYGEKSQQEADAA), and 437 to 470 (LNACVLLAQAEVKLKHYQSAISSFENALERARLL). A disordered region spans residues 487 to 531 (KQGMEEQQESEQNNDENDNLRADGNTARDEEEEDVHVQRTEEDEG). Over residues 492–503 (EQQESEQNNDEN) the composition is skewed to acidic residues. Positions 521-531 (VHVQRTEEDEG) are enriched in basic and acidic residues.

As to quaternary structure, component of the outer dynein arm-docking complex. As to expression, in the mucociliary epithelium, specifically expressed in ciliated cells.

It is found in the cytoplasm. The protein localises to the cytoskeleton. Its subcellular location is the cilium axoneme. In terms of biological role, component of the outer dynein arm-docking complex (ODA-DC) that mediates outer dynein arms (ODA) binding onto the doublet microtubule. Plays an essential role for the assembly of ODA-DC and in the docking of ODA in ciliary axoneme. Its function is as follows. Required for the docking of the outer dynein arm to cilia, hence plays an essential role in cilia motility. In Xenopus laevis (African clawed frog), this protein is Outer dynein arm-docking complex subunit 4 (odad4).